A 65-amino-acid chain; its full sequence is Peptide ToAcP (65 aa).

Residues 1 to 24 (MKMKMIVVISILLIVFSLSSKAMS) form the signal peptide. A propeptide spanning residues 25–34 (LEDEQESVQR) is cleaved from the precursor. Residue Ala58 is modified to Alanine amide. A propeptide spanning residues 59–65 (GRFDPAV) is cleaved from the precursor.

As to expression, expressed by the venom gland.

The protein localises to the secreted. Functionally, helical wheel projections predict no hydrophobic face, suggesting a non-amphipathic peptide. Does not show antifungal activity. The protein is Peptide ToAcP of Tityus obscurus (Amazonian scorpion).